A 134-amino-acid chain; its full sequence is Small ribosomal subunit protein uS11 (134 aa).

It belongs to the universal ribosomal protein uS11 family. Part of the 30S ribosomal subunit. Interacts with proteins S7 and S18. Binds to IF-3.

Located on the platform of the 30S subunit, it bridges several disparate RNA helices of the 16S rRNA. Forms part of the Shine-Dalgarno cleft in the 70S ribosome. In Micrococcus luteus (strain ATCC 4698 / DSM 20030 / JCM 1464 / CCM 169 / CCUG 5858 / IAM 1056 / NBRC 3333 / NCIMB 9278 / NCTC 2665 / VKM Ac-2230) (Micrococcus lysodeikticus), this protein is Small ribosomal subunit protein uS11.